Reading from the N-terminus, the 318-residue chain is Protein-methionine-sulfoxide reductase catalytic subunit MsrP (318 aa).

Residues 1-40 constitute a signal peptide (tat-type signal); it reads MNRFTRYDVTPEVIFNQRRQIIKAMGLGAAALSLPNIGFA. Residues N72, 75-76, C130, T165, N217, R222, and 233-235 contribute to the Mo-molybdopterin site; these read YE and SIK.

It belongs to the MsrP family. Heterodimer of a catalytic subunit (MsrP) and a heme-binding subunit (MsrQ). Mo-molybdopterin is required as a cofactor. In terms of processing, predicted to be exported by the Tat system. The position of the signal peptide cleavage has not been experimentally proven.

It localises to the periplasm. It catalyses the reaction L-methionyl-[protein] + a quinone + H2O = L-methionyl-(S)-S-oxide-[protein] + a quinol. The enzyme catalyses L-methionyl-[protein] + a quinone + H2O = L-methionyl-(R)-S-oxide-[protein] + a quinol. In terms of biological role, part of the MsrPQ system that repairs oxidized periplasmic proteins containing methionine sulfoxide residues (Met-O), using respiratory chain electrons. Thus protects these proteins from oxidative-stress damage caused by reactive species of oxygen and chlorine generated by the host defense mechanisms. MsrPQ is essential for the maintenance of envelope integrity under bleach stress, rescuing a wide series of structurally unrelated periplasmic proteins from methionine oxidation. The catalytic subunit MsrP is non-stereospecific, being able to reduce both (R-) and (S-) diastereoisomers of methionine sulfoxide. In Actinobacillus pleuropneumoniae serotype 3 (strain JL03), this protein is Protein-methionine-sulfoxide reductase catalytic subunit MsrP.